The following is a 285-amino-acid chain: MRLIIVSGRSGSGKSTALDVLEDNGFYCIDNLPAGLLPDLAERALLNTEMLLPQVAVSIDARNLQSHLRRFPELLEQVRQRNIRCDILYLDADDETLLKRFSETRRRHPLTDENRSLAEAIADETQVLAPIVDLADLKIDTTHLNLYQLRDSLKLRLLNQPEPGTAFLFESFGFKRGMPVDADLVFDARCLPNPYWKPELRDFSGLQQPVIDYLAAQPEVEEMYQDILAYLEKWLPRFAASNRAYVTIAIGCTGGHHRSVYLANRLSQALKKPLKNVQVRHRDLS.

8 to 15 (GRSGSGKS) is an ATP binding site. 60–63 (DARN) contributes to the GTP binding site.

The protein belongs to the RapZ-like family.

Displays ATPase and GTPase activities. The sequence is that of Nucleotide-binding protein Pmen_0867 from Ectopseudomonas mendocina (strain ymp) (Pseudomonas mendocina).